The sequence spans 688 residues: NADH-ubiquinone oxidoreductase 75 kDa subunit (688 aa).

In terms of domain architecture, 2Fe-2S ferredoxin-type spans 1-85 (MLIRFKINEI…DESIETEIDE (85 aa)). [2Fe-2S] cluster contacts are provided by cysteine 38, cysteine 49, cysteine 52, and cysteine 66. In terms of domain architecture, 4Fe-4S His(Cys)3-ligated-type spans 85 to 124 (EILKAREGVMEFLLINHPLDCPICDQGGECDLQEQTIAYG). 8 residues coordinate [4Fe-4S] cluster: histidine 101, cysteine 105, cysteine 108, cysteine 114, cysteine 153, cysteine 156, cysteine 159, and cysteine 204. Residues 223–279 (LKNIKGIDIFDTVLTPINYQVKGGEIFRILPRINDRLNEEWITDKVRFHYESYKIIE) form the 4Fe-4S Mo/W bis-MGD-type domain.

It belongs to the complex I 75 kDa subunit family. As to quaternary structure, complex I is composed of about 45 different subunits. [2Fe-2S] cluster serves as cofactor. The cofactor is [4Fe-4S] cluster.

The protein resides in the mitochondrion inner membrane. The enzyme catalyses a ubiquinone + NADH + 5 H(+)(in) = a ubiquinol + NAD(+) + 4 H(+)(out). Functionally, core subunit of the mitochondrial membrane respiratory chain NADH dehydrogenase (Complex I) that is believed to belong to the minimal assembly required for catalysis. Complex I functions in the transfer of electrons from NADH to the respiratory chain. The immediate electron acceptor for the enzyme is believed to be ubiquinone. This is the largest subunit of complex I and it is a component of the iron-sulfur (IP) fragment of the enzyme. It may form part of the active site crevice where NADH is oxidized. The polypeptide is NADH-ubiquinone oxidoreductase 75 kDa subunit (nad11) (Dictyostelium citrinum (Slime mold)).